A 183-amino-acid polypeptide reads, in one-letter code: Small ribosomal subunit protein uS4c (183 aa).

The 62-residue stretch at 82–143 (MRLDNILFRL…KQRSKALIQN (62 aa)) folds into the S4 RNA-binding domain.

Belongs to the universal ribosomal protein uS4 family. In terms of assembly, part of the 30S ribosomal subunit. Contacts protein S5. The interaction surface between S4 and S5 is involved in control of translational fidelity.

The protein localises to the plastid. It is found in the chloroplast. One of the primary rRNA binding proteins, it binds directly to 16S rRNA where it nucleates assembly of the body of the 30S subunit. In terms of biological role, with S5 and S12 plays an important role in translational accuracy. This chain is Small ribosomal subunit protein uS4c (rps4), found in Crocosmia sp. (strain Porto Alegre 034).